Consider the following 264-residue polypeptide: Ion-translocating oxidoreductase complex subunit B (264 aa).

A helical membrane pass occupies residues 5-25 (LINSIAVLAGLGFAVGVMLVI). The region spanning 33–92 (DSNPLIDDVASLLPGANCGGCGFAGCAACAEAIVEQGAPVNSCPVGGFEVAKQIGALLGQ) is the 4Fe-4S domain. The [4Fe-4S] cluster site is built by Cys-50, Cys-53, Cys-58, Cys-75, Cys-138, Cys-142, Cys-148, Cys-152, Cys-172, Cys-175, Cys-178, Cys-182, Cys-217, Cys-220, Cys-223, Cys-227, Cys-246, Cys-249, Cys-252, and Cys-256. 4 consecutive 4Fe-4S ferredoxin-type domains span residues 127–162 (VALM…MGED), 163–192 (GFPV…FARD), 207–236 (KDVK…RVTE), and 237–264 (FLAE…IELR).

This sequence belongs to the 4Fe4S bacterial-type ferredoxin family. RnfB subfamily. In terms of assembly, the Rnf complex is probably composed of eight subunits, including RnfA, RnfB, RnfC, RnfD, RnfE and RnfG. [4Fe-4S] cluster is required as a cofactor.

Its subcellular location is the cell membrane. Its function is as follows. Part of a membrane-bound complex that couples electron transfer with translocation of ions across the membrane. Catalyzes Na(+) transport, most probably coupled to electron transfer from reduced ferredoxin to methanophenazine and heterodisulfide reductase. Involved in heterodisulfide reduction during methanogenesis from acetate. The polypeptide is Ion-translocating oxidoreductase complex subunit B (Methanosarcina acetivorans (strain ATCC 35395 / DSM 2834 / JCM 12185 / C2A)).